We begin with the raw amino-acid sequence, 274 residues long: Pantothenate synthetase (274 aa).

An ATP-binding site is contributed by 26–33; the sequence is MGNLHAGH. Residue histidine 33 is the Proton donor of the active site. Position 57 (glutamine 57) interacts with (R)-pantoate. Glutamine 57 lines the beta-alanine pocket. 143-146 serves as a coordination point for ATP; the sequence is GKKD. Glutamine 149 is a binding site for (R)-pantoate. ATP is bound by residues valine 172 and 180–183; that span reads LSSR.

Belongs to the pantothenate synthetase family. In terms of assembly, homodimer.

Its subcellular location is the cytoplasm. It carries out the reaction (R)-pantoate + beta-alanine + ATP = (R)-pantothenate + AMP + diphosphate + H(+). It functions in the pathway cofactor biosynthesis; (R)-pantothenate biosynthesis; (R)-pantothenate from (R)-pantoate and beta-alanine: step 1/1. In terms of biological role, catalyzes the condensation of pantoate with beta-alanine in an ATP-dependent reaction via a pantoyl-adenylate intermediate. This Dechloromonas aromatica (strain RCB) protein is Pantothenate synthetase.